Consider the following 175-residue polypeptide: Inorganic pyrophosphatase (175 aa).

Substrate-binding residues include Lys-29, Arg-43, and Tyr-55. Positions 65, 70, and 102 each coordinate Mg(2+). Tyr-141 contributes to the substrate binding site.

This sequence belongs to the PPase family. As to quaternary structure, homohexamer. Requires Mg(2+) as cofactor.

Its subcellular location is the cytoplasm. The catalysed reaction is diphosphate + H2O = 2 phosphate + H(+). Its function is as follows. Catalyzes the hydrolysis of inorganic pyrophosphate (PPi) forming two phosphate ions. This Rickettsia bellii (strain RML369-C) protein is Inorganic pyrophosphatase.